The sequence spans 443 residues: Xaa-Pro dipeptidase (443 aa).

Mn(2+) contacts are provided by Asp246, Asp257, His339, Glu384, and Glu423.

The protein belongs to the peptidase M24B family. Bacterial-type prolidase subfamily. Mn(2+) is required as a cofactor.

The enzyme catalyses Xaa-L-Pro dipeptide + H2O = an L-alpha-amino acid + L-proline. Splits dipeptides with a prolyl residue in the C-terminal position. The sequence is that of Xaa-Pro dipeptidase from Serratia proteamaculans (strain 568).